We begin with the raw amino-acid sequence, 3477 residues long: Abnormal spindle-like microcephaly-associated protein (3477 aa).

Positions M1–E30 are disordered. S280, S283, S367, and S392 each carry phosphoserine. The interval I308–Q409 is sufficient for interaction with KATNA1:KATNB1. Over residues L415 to Q424 the composition is skewed to polar residues. 2 disordered regions span residues L415–G443 and K559–M581. At S425 the chain carries Phosphoserine. Over residues N560–S570 the composition is skewed to polar residues. S605 bears the Phosphoserine mark. In terms of domain architecture, Calponin-homology (CH) 1 spans K920–Q1056. A coiled-coil region spans residues V1057–S1078. Position 1103 is a phosphoserine (S1103). The 152-residue stretch at S1110–L1261 folds into the Calponin-homology (CH) 2 domain. IQ domains lie at Q1347 to Q1378, Y1393 to S1422, L1582 to Q1613, T1632 to K1661, I1655 to K1684, M1728 to S1757, Q1751 to Q1782, V1801 to K1830, Q1824 to K1853, T1874 to K1903, E1897 to Q1928, L1947 to Q1978, Q1970 to Q2001, T2020 to T2049, C2043 to Q2074, L2093 to K2124, M2116 to Q2147, I2166 to Q2197, M2189 to T2218, L2239 to Q2270, M2262 to Q2293, V2311 to Q2342, M2334 to Q2365, Q2384 to Q2415, M2407 to Q2438, L2457 to Q2488, Q2530 to Q2561, Q2624 to S2653, R2665 to Q2696, M2688 to Q2719, V2738 to A2767, Q2859 to Q2890, I2909 to K2938, I2932 to A2963, K2954 to Q2985, R3029 to Q3060, F3079 to H3110, R3181 to K3210, and F3204 to S3235.

As to quaternary structure, interacts with KATNA1 and KATNB1; katanin complex formation KATNA1:KATNB1 is required for the association.

It is found in the cytoplasm. Its subcellular location is the cytoskeleton. The protein resides in the spindle. The protein localises to the nucleus. In terms of biological role, involved in mitotic spindle regulation and coordination of mitotic processes. The function in regulating microtubule dynamics at spindle poles including spindle orientation, astral microtubule density and poleward microtubule flux seems to depend on the association with the katanin complex formed by KATNA1 and KATNB1. Enhances the microtubule lattice severing activity of KATNA1 by recruiting the katanin complex to microtubules. Can block microtubule minus-end growth and reversely this function can be enhanced by the katanin complex. May have a preferential role in regulating neurogenesis. The chain is Abnormal spindle-like microcephaly-associated protein (ASPM) from Homo sapiens (Human).